We begin with the raw amino-acid sequence, 352 residues long: Mitochondrial ubiquitin ligase activator of NFKB 1 (352 aa).

Topologically, residues 1–8 (MENGGRPS) are cytoplasmic. A helical membrane pass occupies residues 9–29 (LCQFILLGTTSVVTAALYSVY). Topologically, residues 30–238 (RQKAWVSQEL…LLQRQESSVR (209 aa)) are mitochondrial intermembrane. K52 is covalently cross-linked (Glycyl lysine isopeptide (Lys-Gly) (interchain with G-Cter in ubiquitin)). A helical transmembrane segment spans residues 239–259 (LWKVLALVFGFATCATLFFIL). Topologically, residues 260–352 (RKQYLQRQER…ITRVIPLYNS (93 aa)) are cytoplasmic. Residues K273 and K299 each participate in a glycyl lysine isopeptide (Lys-Gly) (interchain with G-Cter in ubiquitin) cross-link. An RING-type zinc finger spans residues 302–340 (CVVCLSSFKSCVFLECGHVCSCTECYRALPEPKKCPICR).

As to quaternary structure, homooligomer. Interacts with MAP3K7/TAK1. Interacts with UBC9. Interacts with and sumoylates DNM1L. Interacts with MAVS. Interacts with TP53 (via N-terminus); the interaction leads to ubiquitination and proteasomal degradation of TP53. In terms of processing, ubiquitinated by PRKN during mitophagy, leading to its degradation and enhancement of mitophagy. Deubiquitinated by USP30.

Its subcellular location is the mitochondrion outer membrane. The protein resides in the peroxisome. The catalysed reaction is S-ubiquitinyl-[E2 ubiquitin-conjugating enzyme]-L-cysteine + [acceptor protein]-L-lysine = [E2 ubiquitin-conjugating enzyme]-L-cysteine + N(6)-ubiquitinyl-[acceptor protein]-L-lysine.. Its pathway is protein modification; protein ubiquitination. It participates in protein modification; protein sumoylation. Its function is as follows. Exhibits weak E3 ubiquitin-protein ligase activity. E3 ubiquitin ligases accept ubiquitin from an E2 ubiquitin-conjugating enzyme in the form of a thioester and then directly transfer the ubiquitin to targeted substrates. Can ubiquitinate AKT1 preferentially at 'Lys-284' involving 'Lys-48'-linked polyubiquitination and seems to be involved in regulation of Akt signaling by targeting phosphorylated Akt to proteasomal degradation. Mediates polyubiquitination of cytoplasmic TP53 at 'Lys-24' which targets TP53 for proteasomal degradation, thus reducing TP53 levels in the cytoplasm and mitochondrion. Proposed to preferentially act as a SUMO E3 ligase at physiological concentrations. Plays a role in the control of mitochondrial morphology by promoting mitochondrial fragmentation, and influences mitochondrial localization. Likely to promote mitochondrial fission through negatively regulating the mitochondrial fusion proteins MFN1 and MFN2, acting in a pathway that is parallel to the PRKN/PINK1 regulatory pathway. May also be involved in the sumoylation of the membrane fission protein DNM1L. Inhibits cell growth. When overexpressed, activates JNK through MAP3K7/TAK1 and induces caspase-dependent apoptosis. Involved in the modulation of innate immune defense against viruses by inhibiting RIGI-dependent antiviral response. Can mediate RIGI sumoylation and disrupt its polyubiquitination. The protein is Mitochondrial ubiquitin ligase activator of NFKB 1 (MUL1) of Macaca fascicularis (Crab-eating macaque).